We begin with the raw amino-acid sequence, 125 residues long: MIKIDFEKMGGLIPAVIQDNESGEVLMVAFMDEKTLNLTLESGKTWFFSRTRNKYWMKGEESGNTQDVVEVLTDCDADTVVIKVKQNGPAACHTGNRSCFYVRYENGAWVEHSNPLFDPNTVYKK.

Residue aspartate 74 coordinates Mg(2+). Zn(2+) is bound at residue cysteine 75. Aspartate 76 and aspartate 78 together coordinate Mg(2+). 2 residues coordinate Zn(2+): cysteine 92 and cysteine 99.

The protein belongs to the PRA-CH family. As to quaternary structure, homodimer. Mg(2+) is required as a cofactor. Zn(2+) serves as cofactor.

It localises to the cytoplasm. It catalyses the reaction 1-(5-phospho-beta-D-ribosyl)-5'-AMP + H2O = 1-(5-phospho-beta-D-ribosyl)-5-[(5-phospho-beta-D-ribosylamino)methylideneamino]imidazole-4-carboxamide. Its pathway is amino-acid biosynthesis; L-histidine biosynthesis; L-histidine from 5-phospho-alpha-D-ribose 1-diphosphate: step 3/9. Its function is as follows. Catalyzes the hydrolysis of the adenine ring of phosphoribosyl-AMP. This Citrifermentans bemidjiense (strain ATCC BAA-1014 / DSM 16622 / JCM 12645 / Bem) (Geobacter bemidjiensis) protein is Phosphoribosyl-AMP cyclohydrolase.